Here is a 273-residue protein sequence, read N- to C-terminus: Elongation factor Ts (273 aa).

The interval Thr-80–Val-83 is involved in Mg(2+) ion dislocation from EF-Tu.

The protein belongs to the EF-Ts family.

It is found in the cytoplasm. Functionally, associates with the EF-Tu.GDP complex and induces the exchange of GDP to GTP. It remains bound to the aminoacyl-tRNA.EF-Tu.GTP complex up to the GTP hydrolysis stage on the ribosome. The protein is Elongation factor Ts of Tropheryma whipplei (strain Twist) (Whipple's bacillus).